Consider the following 303-residue polypeptide: 1-acyl-sn-glycerol-3-phosphate acyltransferase (303 aa).

Residues 82–87 (HQSTLD) carry the HXXXXD motif motif. Residues 278–303 (NEPVPSVSISNDVNTHNEGSSVKKMH) are disordered. Residues 284–297 (VSISNDVNTHNEGS) are compositionally biased toward polar residues.

This sequence belongs to the 1-acyl-sn-glycerol-3-phosphate acyltransferase family.

The protein localises to the lipid droplet. The catalysed reaction is a 1-acyl-sn-glycero-3-phosphate + an acyl-CoA = a 1,2-diacyl-sn-glycero-3-phosphate + CoA. It catalyses the reaction a 1-acyl-sn-glycero-3-phosphocholine + an acyl-CoA = a 1,2-diacyl-sn-glycero-3-phosphocholine + CoA. It carries out the reaction a 1-acyl-sn-glycero-3-phosphoethanolamine + an acyl-CoA = a 1,2-diacyl-sn-glycero-3-phosphoethanolamine + CoA. The enzyme catalyses 1-hexadecanoyl-sn-glycero-3-phosphate + (9Z)-octadecenoyl-CoA = 1-hexadecanoyl-2-(9Z-octadecenoyl)-sn-glycero-3-phosphate + CoA. The catalysed reaction is 1-octadecanoyl-sn-glycero-3-phosphate + (9Z)-octadecenoyl-CoA = 1-octadecanoyl-2-(9Z-octadecenoyl)-sn-glycero-3-phosphate + CoA. It catalyses the reaction 1-(9Z-octadecenoyl)-sn-glycero-3-phospho-L-serine + (9Z)-octadecenoyl-CoA = 1,2-di-(9Z)-octadecenoyl-sn-glycero-3-phospho-L-serine + CoA. It carries out the reaction a 1-acyl-sn-glycero-3-phospho-(1D-myo-inositol) + (9Z)-octadecenoyl-CoA = a 1-acyl-2-(9Z-octadecenoyl)-sn-glycero-3-phospho-(1D-myo-inositol) + CoA. The enzyme catalyses 1-heptadecanoyl-sn-glycero-3-phosphate + (9Z)-octadecenoyl-CoA = 1-heptadecanoyl-2-(9Z)-octadecenoyl-sn-glycero-3-phosphate + CoA. The catalysed reaction is 1-heptadecanoyl-sn-glycero-3-phosphate + dodecanoyl-CoA = 1-heptadecanoyl-2-dodecanoyl-sn-glycero-3-phosphate + CoA. It catalyses the reaction 1-heptadecanoyl-sn-glycero-3-phosphate + tetradecanoyl-CoA = 1-heptadecanoyl-2-tetradecanoyl-sn-glycero-3-phosphate + CoA. Its pathway is phospholipid metabolism; CDP-diacylglycerol biosynthesis; CDP-diacylglycerol from sn-glycerol 3-phosphate: step 2/3. Its function is as follows. Acyltransferase that catalyzes the sn-2-specific, acyl-CoA-dependent acylation of lysophosphatidic acid (LPA) to phosphatidic acid (PA) in lipid particles. Together with ALE1, plays a central role in PA biosynthesis. PA is the intermediate, from which all glycerophospholipids are synthesized. Can also acylate lysophosphoinositol (LPI) and lysophosphoserine (LPS). The fatty acyl substrates include 18:1-acyl-CoA, 14:0-acyl-CoA, 12:0-acyl-CoA and 10:0-acyl-CoA. The sequence is that of 1-acyl-sn-glycerol-3-phosphate acyltransferase from Saccharomyces cerevisiae (strain ATCC 204508 / S288c) (Baker's yeast).